A 400-amino-acid chain; its full sequence is Large envelope protein (400 aa).

Met1 is modified (N-acetylmethionine). Gly2 carries the N-myristoyl glycine; by host lipid modification. A pre-S1 region spans residues Gly2–Ala119. The tract at residues Gly2–Asn174 is pre-S. Residues Gly2–Gly181 lie on the Virion surface; in external conformation side of the membrane. At Gly2 to Arg253 the chain is on the intravirion; in internal conformation side. Pro4 is a glycosylation site (N-linked (GlcNAc...) asparagine). The disordered stretch occupies residues Pro70–Thr115. The segment covering Pro79 to Ser88 has biased composition (polar residues). Residues Met120–Asn174 are pre-S2. A helical membrane pass occupies residues Leu182–Ile202. Residues Pro203 to Arg253 are Intravirion; in external conformation-facing. The chain crosses the membrane as a helical span at residues Phe254 to Tyr274. The Virion surface portion of the chain corresponds to Gln275 to Ser348. Residue Asn320 is glycosylated (N-linked (GlcNAc...) asparagine; by host). The helical transmembrane segment at Leu349 to Ile369 threads the bilayer. Over Trp370–Trp375 the chain is Intravirion. Residues Gly376–Ala398 traverse the membrane as a helical segment. Topologically, residues Ser399–Ile400 are virion surface.

The protein belongs to the orthohepadnavirus major surface antigen family. As to quaternary structure, in its internal form (Li-HBsAg), interacts with the capsid protein and with the isoform S. Interacts with host chaperone CANX. In terms of assembly, associates with host chaperone CANX through its pre-S2 N glycan; this association may be essential for isoform M proper secretion. Interacts with isoform L. Interacts with the antigens of satellite virus HDV (HDVAgs); this interaction is required for encapsidation of HDV genomic RNA. Isoform M is N-terminally acetylated by host at a ratio of 90%, and N-glycosylated by host at the pre-S2 region. In terms of processing, myristoylated.

Its subcellular location is the virion membrane. Functionally, the large envelope protein exists in two topological conformations, one which is termed 'external' or Le-HBsAg and the other 'internal' or Li-HBsAg. In its external conformation the protein attaches the virus to cell receptors and thereby initiating infection. This interaction determines the species specificity and liver tropism. This attachment induces virion internalization predominantly through caveolin-mediated endocytosis. The large envelope protein also assures fusion between virion membrane and endosomal membrane. In its internal conformation the protein plays a role in virion morphogenesis and mediates the contact with the nucleocapsid like a matrix protein. The middle envelope protein plays an important role in the budding of the virion. It is involved in the induction of budding in a nucleocapsid independent way. In this process the majority of envelope proteins bud to form subviral lipoprotein particles of 22 nm of diameter that do not contain a nucleocapsid. The chain is Large envelope protein from Hepatitis B virus genotype H subtype adw4 (isolate Nicaragua/2928Nic/1997) (HBV-H).